Reading from the N-terminus, the 341-residue chain is L-threonine 3-dehydrogenase (341 aa).

Zn(2+) is bound at residue Cys38. Active-site charge relay system residues include Thr40 and His43. Zn(2+) is bound by residues His63, Glu64, Cys93, Cys96, Cys99, and Cys107. NAD(+) is bound by residues Ile175, Asp195, Arg200, 262–264 (LGI), and 286–287 (IY).

It belongs to the zinc-containing alcohol dehydrogenase family. As to quaternary structure, homotetramer. Requires Zn(2+) as cofactor.

The protein localises to the cytoplasm. It carries out the reaction L-threonine + NAD(+) = (2S)-2-amino-3-oxobutanoate + NADH + H(+). Its pathway is amino-acid degradation; L-threonine degradation via oxydo-reductase pathway; glycine from L-threonine: step 1/2. Catalyzes the NAD(+)-dependent oxidation of L-threonine to 2-amino-3-ketobutyrate. The sequence is that of L-threonine 3-dehydrogenase from Escherichia coli O157:H7.